A 125-amino-acid chain; its full sequence is Small ribosomal subunit protein uS13 (125 aa).

The tract at residues 91-125 is disordered; sequence HRRGLPARGQRTRTNARTRKGKRKTVAGKKKAGKK.

Belongs to the universal ribosomal protein uS13 family. Part of the 30S ribosomal subunit. Forms a loose heterodimer with protein S19. Forms two bridges to the 50S subunit in the 70S ribosome.

Its function is as follows. Located at the top of the head of the 30S subunit, it contacts several helices of the 16S rRNA. In the 70S ribosome it contacts the 23S rRNA (bridge B1a) and protein L5 of the 50S subunit (bridge B1b), connecting the 2 subunits; these bridges are implicated in subunit movement. Contacts the tRNAs in the A and P-sites. The chain is Small ribosomal subunit protein uS13 from Chloroherpeton thalassium (strain ATCC 35110 / GB-78).